We begin with the raw amino-acid sequence, 450 residues long: Glucose-6-phosphate isomerase (450 aa).

Glutamate 291 (proton donor) is an active-site residue. Active-site residues include histidine 312 and lysine 426.

This sequence belongs to the GPI family.

Its subcellular location is the cytoplasm. The enzyme catalyses alpha-D-glucose 6-phosphate = beta-D-fructose 6-phosphate. It functions in the pathway carbohydrate biosynthesis; gluconeogenesis. The protein operates within carbohydrate degradation; glycolysis; D-glyceraldehyde 3-phosphate and glycerone phosphate from D-glucose: step 2/4. Its function is as follows. Catalyzes the reversible isomerization of glucose-6-phosphate to fructose-6-phosphate. The protein is Glucose-6-phosphate isomerase of Clostridium botulinum (strain Langeland / NCTC 10281 / Type F).